The following is a 149-amino-acid chain: Transcriptional repressor NrdR (149 aa).

Residues 3–34 (CPFCSENDTKVIDSRLVADGHQVRRRRQCLAC) fold into a zinc finger. Residues 49–139 (PKVIKSNGNR…VYRSFEDIRE (91 aa)) enclose the ATP-cone domain.

This sequence belongs to the NrdR family. Zn(2+) is required as a cofactor.

Functionally, negatively regulates transcription of bacterial ribonucleotide reductase nrd genes and operons by binding to NrdR-boxes. This chain is Transcriptional repressor NrdR, found in Vibrio atlanticus (strain LGP32) (Vibrio splendidus (strain Mel32)).